We begin with the raw amino-acid sequence, 132 residues long: Small ribosomal subunit protein uS11 (132 aa).

Belongs to the universal ribosomal protein uS11 family. As to quaternary structure, part of the 30S ribosomal subunit. Interacts with proteins S7 and S18. Binds to IF-3.

In terms of biological role, located on the platform of the 30S subunit, it bridges several disparate RNA helices of the 16S rRNA. Forms part of the Shine-Dalgarno cleft in the 70S ribosome. The polypeptide is Small ribosomal subunit protein uS11 (Lachnoclostridium phytofermentans (strain ATCC 700394 / DSM 18823 / ISDg) (Clostridium phytofermentans)).